The primary structure comprises 593 residues: Eukaryotic peptide chain release factor subunit 1 (593 aa).

This sequence belongs to the eukaryotic release factor 1 family. Heterodimer of two subunits, one of which binds GTP.

The protein localises to the cytoplasm. Its function is as follows. Directs the termination of nascent peptide synthesis (translation) in response to the termination codons UAA, UAG and UGA. The chain is Eukaryotic peptide chain release factor subunit 1 from Caenorhabditis elegans.